The sequence spans 170 residues: Thialysine N-epsilon-acetyltransferase (170 aa).

The region spanning 4–168 is the N-acetyltransferase domain; that stretch reads VRIREAKEGD…FQGEATRKLA (165 aa). 27–28 contacts substrate; sequence FE. K29 carries the N6-acetyllysine modification. E92 is a substrate binding site. Acetyl-CoA is bound by residues 94–96, 102–107, 133–135, and Y140; these read IYV, GQGIGS, and NQR. Residue Y140 is the Proton donor of the active site. E152 contributes to the substrate binding site.

It belongs to the acetyltransferase family. As to quaternary structure, homodimer. As to expression, widely expressed. Under physiological conditions, SSAT2 is expressed at lower level that SSAT1 (SSAT). Many tissues express only SSAT1, several tissues express both SSAT1 and SSAT2, and bone, cervix, ovary and pineal gland expressed only SSAT2.

Its subcellular location is the cytoplasm. The enzyme catalyses S-(2-aminoethyl)-L-cysteine + acetyl-CoA = S-(2-acetamidoethyl)-L-cysteine + CoA + H(+). It carries out the reaction an alkane-alpha,omega-diamine + acetyl-CoA = an N-acetylalkane-alpha,omega-diamine + CoA + H(+). Functionally, catalyzes the N-acetylation of the amino acid thialysine (S-(2-aminoethyl)-L-cysteine), a L-lysine analog with the 4-methylene group substituted with a sulfur. May also catalyze acetylation of polyamines, such as norspermidine, spermidine or spermine. However, ability to acetylate polyamines is weak, suggesting that it does not act as a diamine acetyltransferase in vivo. The protein is Thialysine N-epsilon-acetyltransferase of Homo sapiens (Human).